Consider the following 248-residue polypeptide: 26.2 kDa heat shock protein, mitochondrial (248 aa).

The N-terminal 32 residues, 1 to 32 (MASTVALKGRPLATLLRQLLAADAPPAATGRP), are a transit peptide targeting the mitochondrion. A disordered region spans residues 26–48 (PAATGRPVAAAPAASGKPVTAPA). The 110-residue stretch at 139–248 (ATAAARRGGW…RKDVFQVNVE (110 aa)) folds into the sHSP domain.

Belongs to the small heat shock protein (HSP20) family. In terms of assembly, may form oligomeric structures.

Its subcellular location is the mitochondrion. The polypeptide is 26.2 kDa heat shock protein, mitochondrial (HSP26.2) (Oryza sativa subsp. japonica (Rice)).